A 291-amino-acid polypeptide reads, in one-letter code: RPE-retinal G protein-coupled receptor (291 aa).

Residues 1–15 (MAATRALPAGLGELE) lie on the Extracellular side of the membrane. A helical membrane pass occupies residues 16-36 (VLAVGTVLLMEALSGISLNGL). Over 37–52 (TIFSFCKTPDLRTPSN) the chain is Cytoplasmic. The chain crosses the membrane as a helical span at residues 53–73 (LLVLSLALADTGISLNALVAA). Residues 74–91 (VSSLLRRWPHGSEGCQVH) lie on the Extracellular side of the membrane. C88 and C162 are disulfide-bonded. The chain crosses the membrane as a helical span at residues 92-112 (GFQGFATALASICGSAAVAWG). Topologically, residues 113–130 (RYHHYCTRRQLAWDTAIP) are cytoplasmic. The helical transmembrane segment at 131–151 (LVLFVWMSSAFWASLPLMGWG) threads the bilayer. At 152–175 (HYDYEPVGTCCTLDYSRGDRNFIS) the chain is on the extracellular side. Residues 176–196 (FLFTMAFFNFLVPLFITHTSY) traverse the membrane as a helical segment. The Cytoplasmic segment spans residues 197–219 (RFMEQKFSRSGHLPVNTTLPGRM). A helical membrane pass occupies residues 220 to 240 (LLLGWGPYALLYLYAAIADVS). The Extracellular segment spans residues 241–247 (FISPKLQ). Residues 248–268 (MVPALIAKTMPTINAINYALH) form a helical membrane-spanning segment. Residue K255 is modified to N6-(retinylidene)lysine. Topologically, residues 269–291 (REMVCRGTWQCLSPQKSKKDRTQ) are cytoplasmic.

It belongs to the G-protein coupled receptor 1 family. Opsin subfamily. Post-translationally, covalently binds all-trans- and 11-cis-retinal.

It is found in the membrane. Functionally, receptor for all-trans- and 11-cis-retinal. Binds preferentially to the former and may catalyze the isomerization of the chromophore by a retinochrome-like mechanism. The sequence is that of RPE-retinal G protein-coupled receptor (Rgr) from Mus musculus (Mouse).